Here is a 205-residue protein sequence, read N- to C-terminus: MSFTDDQSPVAEQNKKTPSEGHWFAVQVASGCEKRVKLNLEQRIHTLDVADRILQVEIPKTPIVKIRKDGARVQGEEKIFPGYVLIRMIMDDDAWQVVKNTPHVINFVGSEQKRHYGRGRGHVLPMPLSHGEVERIFRHVDEQEPVVKIDMEIGDHIMVLSGPFKDFEGDVIEVSPERSKLKALLSIFGRETPVELEFTQVEKQN.

The region spanning 154-178 is the KOW domain; it reads GDHIMVLSGPFKDFEGDVIEVSPER.

It belongs to the NusG family.

In terms of biological role, participates in transcription elongation, termination and antitermination. The polypeptide is Transcription termination/antitermination protein NusG (Synechocystis sp. (strain ATCC 27184 / PCC 6803 / Kazusa)).